The following is a 236-amino-acid chain: Rho-related GTP-binding protein RhoV (236 aa).

Positions 1–27 are disordered; that stretch reads MPPRELSEAEPPPLRAPTPPPRRRSAP. A compositionally biased stretch (pro residues) spans 10 to 20; the sequence is EPPPLRAPTPP. Phosphoserine is present on S25. Residues 38-45, 85-89, and 143-146 contribute to the GTP site; these read GDGAVGKS, DTAGQ, and TQAD. Residue C234 is the site of S-palmitoyl cysteine attachment.

The protein belongs to the small GTPase superfamily. Rho family. Interacts with PAK2. The cofactor is Mg(2+). Highly expressed in pancreas, placenta, and fetal brain.

It is found in the cell membrane. Its subcellular location is the endosome membrane. Plays a role in the control of the actin cytoskeleton via activation of the JNK pathway. In Homo sapiens (Human), this protein is Rho-related GTP-binding protein RhoV.